Reading from the N-terminus, the 1657-residue chain is Ras GTPase-activating-like protein IQGAP1 (1657 aa).

S2 carries the N-acetylserine modification. Position 2 is a phosphoserine (S2). The region spanning 44 to 159 (LCHLEEAKRW…YCIHALSLYL (116 aa)) is the Calponin-homology (CH) domain. Y172 is subject to Phosphotyrosine. S330 carries the phosphoserine modification. Residues 679 to 712 (GDNNSKWVKHWVKGGYYYYHNLETQEGGWDEPPN) form the WW domain. IQ domains are found at residues 745–774 (NEGL…FLKK), 775–804 (QIPA…YLRS), 805–834 (HKDE…YFRD), and 835–864 (HIND…AEDP). The interval 956-1274 (GGLKALSKEK…FFQTACDVPE (319 aa)) is C1. A Ras-GAP domain is found at 1020-1269 (YLLLRLFKTA…QKFRRFFQTA (250 aa)). The segment at 1276–1657 (QDKFNVDEYS…FLLNKKFYGK (382 aa)) is C2. Residues 1410 to 1448 (TPATSEQEAEHQRAMQRRAIRDAKTPDKMKKSKSVKEDS) are disordered. A compositionally biased stretch (basic and acidic residues) spans 1417–1448 (EAEHQRAMQRRAIRDAKTPDKMKKSKSVKEDS). The residue at position 1441 (S1441) is a Phosphoserine; by PKC. S1443 is modified (phosphoserine; by PKC/PRKCE).

Interacts with CDC42; the interaction is demonstrated with IQGAP1 in GTP-bound and in nucleotide-free state. Interacts with RAC1. Does not interact with RHOA. Interacts with TSG101. Interacts with PAK6. Interacts with TMEM14B; this interaction increases IQGAP1 phosphorylation and induces its nuclear translocation. Interacts with SASH1. Interacts with PJVK. Interacts with SLC26A4; this interaction enhances the chloride-bicarbonate exchange activity of SLC26A4. Interacts with SVEP1. Interacts with ILK; the interaction is required for localization of IQGAP to the cell cortex. As to quaternary structure, (Microbial infection) Interacts with ebolavirus vp40. In terms of assembly, (Microbial infection) Interacts with human cytomegalovirus protein UL5. (Microbial infection) Interacts with C.jejuni invasion antigen D (CiaD). In terms of processing, phosphorylation of Ser-1443 by PKC/PRKCE prevents interaction between C1 and C2, allowing binding of nucleotide-free CDC42. Ser-1443 phosphorylation enhances the ability to promote neurite outgrowth. Expressed in the placenta, lung, and kidney. A lower level expression is seen in the heart, liver, skeletal muscle and pancreas.

Its subcellular location is the cell membrane. It localises to the nucleus. It is found in the cytoplasm. The protein resides in the cell cortex. The protein localises to the apical cell membrane. Its subcellular location is the basolateral cell membrane. Functionally, plays a crucial role in regulating the dynamics and assembly of the actin cytoskeleton. Recruited to the cell cortex by interaction with ILK which allows it to cooperate with its effector DIAPH1 to locally stabilize microtubules and allow stable insertion of caveolae into the plasma membrane. Binds to activated CDC42 but does not stimulate its GTPase activity. Associates with calmodulin. May promote neurite outgrowth. May play a possible role in cell cycle regulation by contributing to cell cycle progression after DNA replication arrest. The chain is Ras GTPase-activating-like protein IQGAP1 (IQGAP1) from Homo sapiens (Human).